Reading from the N-terminus, the 407-residue chain is uncharacterized protein (407 aa).

The Lumenal segment spans residues 1–290 (MPLNIIGTAL…SNSLRRVISN (290 aa)). Residues Asp-114, Lys-236, and Ser-281 each coordinate NADP(+). Residue Lys-236 is the Lowers pKa of active site Tyr of the active site. A helical membrane pass occupies residues 291 to 311 (GSVVLLIILYCILLYPILWLF). Over 312–407 (TKSGRRGDQS…KSQNKSRKDD (96 aa)) the chain is Cytoplasmic. Residues 361–390 (ELQKKLFDNTERDILQLEKKVAAKRNANKT) are a coiled coil. The disordered stretch occupies residues 383-407 (AKRNANKTGNQNSKKKSQNKSRKDD). Residues 395–407 (SKKKSQNKSRKDD) show a composition bias toward basic residues.

Belongs to the short-chain dehydrogenases/reductases (SDR) family.

It is found in the endoplasmic reticulum membrane. May be involved in lipid metabolism. This is an uncharacterized protein from Saccharomyces cerevisiae (strain ATCC 204508 / S288c) (Baker's yeast).